The chain runs to 122 residues: Large ribosomal subunit protein uL14c (122 aa).

This sequence belongs to the universal ribosomal protein uL14 family. As to quaternary structure, part of the 50S ribosomal subunit.

It localises to the plastid. The protein resides in the chloroplast. Binds to 23S rRNA. In Dioscorea elephantipes (Elephant's foot yam), this protein is Large ribosomal subunit protein uL14c.